The following is a 572-amino-acid chain: Sulfite reductase [NADPH] hemoprotein beta-component (572 aa).

[4Fe-4S] cluster is bound by residues Cys437, Cys443, Cys482, and Cys486. Cys486 is a binding site for siroheme.

The protein belongs to the nitrite and sulfite reductase 4Fe-4S domain family. In terms of assembly, alpha(8)-beta(8). The alpha component is a flavoprotein, the beta component is a hemoprotein. Siroheme serves as cofactor. It depends on [4Fe-4S] cluster as a cofactor.

The catalysed reaction is hydrogen sulfide + 3 NADP(+) + 3 H2O = sulfite + 3 NADPH + 4 H(+). It participates in sulfur metabolism; hydrogen sulfide biosynthesis; hydrogen sulfide from sulfite (NADPH route): step 1/1. Functionally, component of the sulfite reductase complex that catalyzes the 6-electron reduction of sulfite to sulfide. This is one of several activities required for the biosynthesis of L-cysteine from sulfate. In Bacillus licheniformis (strain ATCC 14580 / DSM 13 / JCM 2505 / CCUG 7422 / NBRC 12200 / NCIMB 9375 / NCTC 10341 / NRRL NRS-1264 / Gibson 46), this protein is Sulfite reductase [NADPH] hemoprotein beta-component.